The sequence spans 202 residues: GPI-anchored hemophore cfmB (202 aa).

An N-terminal signal peptide occupies residues 1 to 18; sequence MHFSRTSLILFAAGLASA. In terms of domain architecture, CFEM spans 19–108; it reads QLPNVPGCSL…STTASETATT (90 aa). 4 disulfide bridges follow: C26/C67, C30/C62, C40/C48, and C50/C83. D45 contributes to the heme binding site. The interval 94-171 is disordered; sequence PVGAASTTAS…PSSQSTSASA (78 aa). Residues 97–171 show a composition bias toward low complexity; sequence AASTTASETA…PSSQSTSASA (75 aa). N180 is lipidated: GPI-anchor amidated asparagine. Residues 181–202 constitute a propeptide, removed in mature form; the sequence is AGSEKANVAGVVAVAAAALYLL.

Belongs to the RBT5 family. The GPI-anchor is attached to the protein in the endoplasmic reticulum and serves to target the protein to the cell surface. There, the glucosamine-inositol phospholipid moiety is cleaved off and the GPI-modified mannoprotein is covalently attached via its lipidless GPI glycan remnant to the 1,6-beta-glucan of the outer cell wall layer.

The protein localises to the secreted. The protein resides in the cell wall. It localises to the cell membrane. GPI-anchored cell wall protein involved in stabilizing the cell wall. Not implicated in virulence, heme uptake and biofilm formation. In Aspergillus fumigatus (strain ATCC MYA-4609 / CBS 101355 / FGSC A1100 / Af293) (Neosartorya fumigata), this protein is GPI-anchored hemophore cfmB.